The primary structure comprises 188 residues: Threonylcarbamoyl-AMP synthase (188 aa).

Residues 3-188 (QLHPSEIKDL…RSGKILRNGQ (186 aa)) enclose the YrdC-like domain.

This sequence belongs to the SUA5 family. TsaC subfamily.

It localises to the cytoplasm. The catalysed reaction is L-threonine + hydrogencarbonate + ATP = L-threonylcarbamoyladenylate + diphosphate + H2O. Required for the formation of a threonylcarbamoyl group on adenosine at position 37 (t(6)A37) in tRNAs that read codons beginning with adenine. Catalyzes the conversion of L-threonine, HCO(3)(-)/CO(2) and ATP to give threonylcarbamoyl-AMP (TC-AMP) as the acyladenylate intermediate, with the release of diphosphate. The sequence is that of Threonylcarbamoyl-AMP synthase from Shewanella sp. (strain ANA-3).